We begin with the raw amino-acid sequence, 146 residues long: ATP synthase epsilon chain (146 aa).

The tract at residues Gln-103–Glu-124 is disordered.

Belongs to the ATPase epsilon chain family. F-type ATPases have 2 components, CF(1) - the catalytic core - and CF(0) - the membrane proton channel. CF(1) has five subunits: alpha(3), beta(3), gamma(1), delta(1), epsilon(1). CF(0) has three main subunits: a, b and c.

It is found in the cell membrane. Produces ATP from ADP in the presence of a proton gradient across the membrane. The protein is ATP synthase epsilon chain of Rubrobacter xylanophilus (strain DSM 9941 / JCM 11954 / NBRC 16129 / PRD-1).